Consider the following 431-residue polypeptide: Glutamyl-tRNA(Gln) amidotransferase subunit A (431 aa).

Catalysis depends on charge relay system residues lysine 55 and serine 130. Catalysis depends on serine 154, which acts as the Acyl-ester intermediate.

It belongs to the amidase family. GatA subfamily. In terms of assembly, heterotrimer of A, B and C subunits.

The enzyme catalyses L-glutamyl-tRNA(Gln) + L-glutamine + ATP + H2O = L-glutaminyl-tRNA(Gln) + L-glutamate + ADP + phosphate + H(+). Allows the formation of correctly charged Gln-tRNA(Gln) through the transamidation of misacylated Glu-tRNA(Gln) in organisms which lack glutaminyl-tRNA synthetase. The reaction takes place in the presence of glutamine and ATP through an activated gamma-phospho-Glu-tRNA(Gln). This is Glutamyl-tRNA(Gln) amidotransferase subunit A from Methanococcus maripaludis (strain C5 / ATCC BAA-1333).